Here is a 259-residue protein sequence, read N- to C-terminus: uncharacterized protein (259 aa).

The N-terminal stretch at 1 to 22 is a signal peptide; the sequence is MKHSSKIIVFVSFLILTIFIGG. Cys23 carries the N-palmitoyl cysteine lipid modification. Cys23 carries S-diacylglycerol cysteine lipidation.

This sequence belongs to the staphylococcal tandem lipoprotein family.

Its subcellular location is the cell membrane. This is an uncharacterized protein from Staphylococcus epidermidis (strain ATCC 35984 / DSM 28319 / BCRC 17069 / CCUG 31568 / BM 3577 / RP62A).